Here is a 119-residue protein sequence, read N- to C-terminus: Holo-[acyl-carrier-protein] synthase (119 aa).

Mg(2+) is bound by residues Asp-5 and Glu-51.

The protein belongs to the P-Pant transferase superfamily. AcpS family. It depends on Mg(2+) as a cofactor.

The protein resides in the cytoplasm. The catalysed reaction is apo-[ACP] + CoA = holo-[ACP] + adenosine 3',5'-bisphosphate + H(+). Transfers the 4'-phosphopantetheine moiety from coenzyme A to a Ser of acyl-carrier-protein. The protein is Holo-[acyl-carrier-protein] synthase of Helicobacter pylori (strain J99 / ATCC 700824) (Campylobacter pylori J99).